Reading from the N-terminus, the 66-residue chain is Large ribosomal subunit protein bL33c (66 aa).

This sequence belongs to the bacterial ribosomal protein bL33 family.

It localises to the plastid. The chain is Large ribosomal subunit protein bL33c from Cuscuta gronovii (Common dodder).